The chain runs to 434 residues: Enolase (434 aa).

Gln163 lines the (2R)-2-phosphoglycerate pocket. Glu205 serves as the catalytic Proton donor. 3 residues coordinate Mg(2+): Asp242, Glu291, and Asp318. Residues Lys343, Arg372, Ser373, and Lys394 each coordinate (2R)-2-phosphoglycerate. Residue Lys343 is the Proton acceptor of the active site.

Belongs to the enolase family. Mg(2+) is required as a cofactor.

Its subcellular location is the cytoplasm. The protein resides in the secreted. The protein localises to the cell surface. It localises to the cell wall. The enzyme catalyses (2R)-2-phosphoglycerate = phosphoenolpyruvate + H2O. Its pathway is carbohydrate degradation; glycolysis; pyruvate from D-glyceraldehyde 3-phosphate: step 4/5. Functionally, catalyzes the reversible conversion of 2-phosphoglycerate (2-PG) into phosphoenolpyruvate (PEP). It is essential for the degradation of carbohydrates via glycolysis. The protein is Enolase of Streptococcus pneumoniae serotype 2 (strain D39 / NCTC 7466).